Here is a 576-residue protein sequence, read N- to C-terminus: Probable proline--tRNA ligase, mitochondrial (576 aa).

It belongs to the class-II aminoacyl-tRNA synthetase family.

It localises to the mitochondrion. It carries out the reaction tRNA(Pro) + L-proline + ATP = L-prolyl-tRNA(Pro) + AMP + diphosphate. The chain is Probable proline--tRNA ligase, mitochondrial (AIM10) from Saccharomyces cerevisiae (strain ATCC 204508 / S288c) (Baker's yeast).